A 69-amino-acid polypeptide reads, in one-letter code: Light-harvesting protein B-1015 beta chain (69 aa).

The Cytoplasmic segment spans residues 2-21 (ADLKPSLTGLTEEEAKEFHG). 2 residues coordinate a bacteriochlorophyll: H20 and H38. The chain crosses the membrane as a helical span at residues 22-44 (IFVTSTVLYLATAVIVHYLVWTA). At 45–56 (RPWIAPIPKGWV) the chain is on the periplasmic side. A propeptide spanning residues 57 to 69 (NLEGVQSALSYLV) is cleaved from the precursor.

This sequence belongs to the antenna complex beta subunit family. As to quaternary structure, the core complex is formed by different alpha and beta chains, binding bacteriochlorophyll molecules, and arranged most probably in tetrameric structures disposed around the reaction center. The non-pigmented gamma chains may constitute additional components.

Its subcellular location is the cell inner membrane. Antenna complexes are light-harvesting systems, which transfer the excitation energy to the reaction centers. This is Light-harvesting protein B-1015 beta chain (pufB) from Blastochloris viridis (Rhodopseudomonas viridis).